A 315-amino-acid chain; its full sequence is Cobalamin biosynthesis protein CobD (315 aa).

The next 5 helical transmembrane spans lie at 54–74, 78–98, 152–172, 203–223, and 295–315; these read GLLF…ILFL, IAYW…LAMT, ADGV…LALM, IANF…SFIL, and LLYM…LLLF.

Belongs to the CobD/CbiB family.

It localises to the cell membrane. Its pathway is cofactor biosynthesis; adenosylcobalamin biosynthesis. Functionally, converts cobyric acid to cobinamide by the addition of aminopropanol on the F carboxylic group. The chain is Cobalamin biosynthesis protein CobD from Listeria monocytogenes serovar 1/2a (strain ATCC BAA-679 / EGD-e).